The chain runs to 965 residues: Chondroitin synthase (965 aa).

Residues 132–418 are galactosaminyltransferase; A1 domain; sequence FTWYKNRKKS…IVKEKVPYIY (287 aa). Residues Pro-158, Arg-162, Asp-189, Tyr-218, Arg-224, and 240-241 each bind UDP-N-acetyl-alpha-D-galactosamine; that span reads DC. Asp-242 provides a ligand contact to Mn(2+). Residue 362–363 participates in UDP-N-acetyl-alpha-D-galactosamine binding; it reads ED. His-387 is a Mn(2+) binding site. The segment at 419–683 is glucuronosyltransferase; A2 domain; it reads RKLLPIEDSH…ESRKYIFNKT (265 aa). Residues Tyr-442, Asp-470, and 518–521 each bind UDP-alpha-D-glucuronate; that span reads QLDS. Residue Asp-522 participates in Mn(2+) binding. Residues His-582 and 604 to 605 each bind UDP-alpha-D-glucuronate; that span reads AV. A Mn(2+)-binding site is contributed by His-632.

It belongs to the glycosyltransferase 2 family. CS/HAS subfamily. The cofactor is Mn(2+).

It is found in the cell membrane. It catalyses the reaction 3-O-(beta-D-GlcA-(1-&gt;3)-beta-D-GalNAc-(1-&gt;4)-beta-D-GlcA-(1-&gt;3)-beta-D-Gal-(1-&gt;3)-beta-D-Gal-(1-&gt;4)-beta-D-Xyl)-L-seryl-[protein] + UDP-N-acetyl-alpha-D-galactosamine = 3-O-(beta-D-GalNAc-(1-&gt;4)-beta-D-GlcA-(1-&gt;3)-beta-D-GalNAc-(1-&gt;4)-beta-D-GlcA-(1-&gt;3)-beta-D-Gal-(1-&gt;3)-beta-D-Gal-(1-&gt;4)-beta-D-Xyl)-L-seryl-[protein] + UDP + H(+). The catalysed reaction is 3-O-{beta-D-GlcA-(1-&gt;3)-[beta-D-GalNAc-(1-&gt;4)-beta-D-GlcA-(1-&gt;3)](n)-beta-D-GalNAc-(1-&gt;4)-beta-D-GlcA-(1-&gt;3)-beta-D-Gal-(1-&gt;3)-beta-D-Gal-(1-&gt;4)-beta-D-Xyl}-L-seryl-[protein] + UDP-N-acetyl-alpha-D-galactosamine = 3-O-{[beta-D-GalNAc-(1-&gt;4)-beta-D-GlcA-(1-&gt;3)](n+1)-beta-D-GalNAc-(1-&gt;4)-beta-D-GlcA-(1-&gt;3)-beta-D-Gal-(1-&gt;3)-beta-D-Gal-(1-&gt;4)-beta-D-Xyl}-L-seryl-[protein] + UDP + H(+). It carries out the reaction 3-O-(beta-D-GalNAc-(1-&gt;4)-beta-D-GlcA-(1-&gt;3)-beta-D-Gal-(1-&gt;3)-beta-D-Gal-(1-&gt;4)-beta-D-Xyl)-L-seryl-[protein] + UDP-alpha-D-glucuronate = 3-O-(beta-D-GlcA-(1-&gt;3)-beta-D-GalNAc-(1-&gt;4)-beta-D-GlcA-(1-&gt;3)-beta-D-Gal-(1-&gt;3)-beta-D-Gal-(1-&gt;4)-beta-D-Xyl)-L-seryl-[protein] + UDP + H(+). The enzyme catalyses 3-O-{[beta-D-GalNAc-(1-&gt;4)-beta-D-GlcA-(1-&gt;3)](n)-beta-D-GalNAc-(1-&gt;4)-beta-D-GlcA-(1-&gt;3)-beta-D-Gal-(1-&gt;3)-beta-D-Gal-(1-&gt;4)-beta-D-Xyl}-L-seryl-[protein] + UDP-alpha-D-glucuronate = 3-O-{beta-D-GlcA-(1-&gt;3)-[beta-D-GalNAc-(1-&gt;4)-beta-D-GlcA-(1-&gt;3)](n)-beta-D-GalNAc-(1-&gt;4)-beta-D-GlcA-(1-&gt;3)-beta-D-Gal-(1-&gt;3)-beta-D-Gal-(1-&gt;4)-beta-D-Xyl}-L-seryl-[protein] + UDP + H(+). In terms of biological role, glycosyltransferase that catalyzes elongation of chondroitin, a polysaccharide composed of a repeating disaccharide of N-acetylgalactosamine (GalNAc) and glucuronic acid (GlcUA) units, by alternatively transferring the GlcUA and GalNAc moiety from UDP-GlcUA and UDP-GalNAc to the non-reducing ends of the chondroitin chain. Each chondroitin unit has the composition beta-(1-&gt;4)-GlcUA-beta-(1-&gt;3)-GalNAc. The sequence is that of Chondroitin synthase (fcbD) from Pasteurella multocida (strain Pm70).